Reading from the N-terminus, the 311-residue chain is Aspartate carbamoyltransferase catalytic subunit (311 aa).

Residues arginine 59 and threonine 60 each contribute to the carbamoyl phosphate site. L-aspartate is bound at residue lysine 87. 3 residues coordinate carbamoyl phosphate: arginine 109, histidine 139, and glutamine 142. Residues arginine 172 and arginine 224 each coordinate L-aspartate. Positions 265 and 266 each coordinate carbamoyl phosphate.

The protein belongs to the aspartate/ornithine carbamoyltransferase superfamily. ATCase family. Heterododecamer (2C3:3R2) of six catalytic PyrB chains organized as two trimers (C3), and six regulatory PyrI chains organized as three dimers (R2).

It carries out the reaction carbamoyl phosphate + L-aspartate = N-carbamoyl-L-aspartate + phosphate + H(+). It participates in pyrimidine metabolism; UMP biosynthesis via de novo pathway; (S)-dihydroorotate from bicarbonate: step 2/3. Its function is as follows. Catalyzes the condensation of carbamoyl phosphate and aspartate to form carbamoyl aspartate and inorganic phosphate, the committed step in the de novo pyrimidine nucleotide biosynthesis pathway. This Streptococcus pyogenes serotype M18 (strain MGAS8232) protein is Aspartate carbamoyltransferase catalytic subunit.